We begin with the raw amino-acid sequence, 359 residues long: 4-galactosyl-N-acetylglucosaminide 3-alpha-L-fucosyltransferase 9 (359 aa).

The Cytoplasmic segment spans residues 1–11 (MTSTSKGILRP). The helical; Signal-anchor for type II membrane protein transmembrane segment at 12–32 (FLIVCIILGCFMACLLIYIKP) threads the bilayer. At 33 to 359 (TNSWIFSPME…VGNLEKWFWN (327 aa)) the chain is on the lumenal side. The N-linked (GlcNAc...) asparagine glycan is linked to Asn-62. An acceptor-binding region spans residues 63 to 168 (ETTILVWVWP…RRDSDIQVPY (106 aa)). Gln-75 is a binding site for a beta-D-galactosyl-(1-&gt;4)-N-acetyl-beta-D-glucosaminyl derivative. 3 disulfides stabilise this stretch: Cys-82-Cys-335, Cys-91-Cys-338, and Cys-190-Cys-238. N-linked (GlcNAc...) asparagine glycosylation is present at Asn-101. Glu-137 lines the a beta-D-galactosyl-(1-&gt;4)-N-acetyl-beta-D-glucosaminyl derivative pocket. Glu-137 acts as the Nucleophile in catalysis. Glu-137 contributes to the GDP-beta-L-fucose binding site. N-linked (GlcNAc...) asparagine glycosylation occurs at Asn-153. Residues Tyr-168, Val-192, Ser-194, Asn-195, Arg-202, Val-226, Tyr-241, Asn-246, Tyr-252, Glu-255, and Lys-256 each contribute to the GDP-beta-L-fucose site. Residues 169-326 (GFLTVSTNPF…NWRKDFTVNL (158 aa)) are donor-binding. Residues 327 to 359 (PRFWESHACLACDHVKRHQEYKSVGNLEKWFWN) are acceptor-binding.

Belongs to the glycosyltransferase 10 family. As to quaternary structure, homodimer. In terms of processing, N-glycosylated with complex-type N-glycans. The glycan alpha-D-Man-(1-&gt;3)-beta-D-Man-(1-&gt;4)-GlcNAc-(1-&gt;4)-GlcNAc is attached at Asn-153. In terms of tissue distribution, strongly expressed in forebrain and stomach, lower expression in spleen and peripheral blood leukocytes, and no expression in small intestine, colon, liver, lung, kidney, adrenal cortex or uterus. Highly expressed in granulocytes. Not expressed in monocytes.

The protein resides in the golgi apparatus. Its subcellular location is the trans-Golgi network membrane. The protein localises to the golgi apparatus membrane. It carries out the reaction a beta-D-galactosyl-(1-&gt;4)-N-acetyl-beta-D-glucosaminyl derivative + GDP-beta-L-fucose = a beta-D-galactosyl-(1-&gt;4)-[alpha-L-fucosyl-(1-&gt;3)]-N-acetyl-beta-D-glucosaminyl derivative + GDP + H(+). It catalyses the reaction an alpha-Neu5Ac-(2-&gt;3)-beta-D-Gal-(1-&gt;4)-beta-D-GlcNAc-(1-&gt;3)-beta-D-Gal-(1-&gt;4)-beta-D-GlcNAc derivative + GDP-beta-L-fucose = an alpha-Neu5Ac-(2-&gt;3)-beta-D-Gal-(1-&gt;4)-beta-D-GlcNAc-(1-&gt;3)-beta-D-Gal-(1-&gt;4)-[alpha-L-Fuc-(1-&gt;3)]-beta-D-GlcNAc derivative + GDP + H(+). The catalysed reaction is alpha-N-glycoloylneuraminosyl-(2-&gt;3)-beta-D-galactosyl-(1-&gt;4)-N-acetyl-beta-D-glucosaminyl-(1-&gt;3)-beta-D-galactosyl-(1-&gt;4)-N-acetyl-beta-D-glucosaminyl-(1-&gt;3)-beta-D-galactosyl-(1-&gt;4)-beta-D-glucosyl-(1&lt;-&gt;1')-ceramide + GDP-beta-L-fucose = alpha-N-glycoloylneuraminosyl-(2-&gt;3)-beta-D-galactosyl-(1-&gt;4)-N-acetyl-beta-D-glucosaminyl-(1-&gt;3)-beta-D-galactosyl-(1-&gt;4)-[alpha-L-fucosyl-(1-&gt;3)]-N-acetyl-beta-D-glucosaminyl-(1-&gt;3)-beta-D-galactosyl-(1-&gt;4)-beta-D-glucosyl-(1&lt;-&gt;1')-ceramide + GDP + H(+). The enzyme catalyses alpha-D-galactosyl-(1-&gt;3)-beta-D-galactosyl-(1-&gt;4)-N-acetyl-beta-D-glucosaminyl-(1-&gt;3)-beta-D-galactosyl-(1-&gt;4)-beta-D-glucosyl-(1&lt;-&gt;1')-ceramide + GDP-beta-L-fucose = a neolactoside IV(3)-alpha-Gal,III(3)-alpha-Fuc-nLc4Cer + GDP + H(+). It carries out the reaction a neolactoside nLc4Cer + GDP-beta-L-fucose = a neolactoside III(3)-alpha-Fuc-nLc4Cer + GDP + H(+). It catalyses the reaction an N-acetyl-alpha-neuraminyl-(2-&gt;3)-beta-D-galactosyl-(1-&gt;4)-N-acetyl-beta-D-glucosaminyl derivative + GDP-beta-L-fucose = an alpha-Neu5Ac-(2-&gt;3)-beta-D-Gal-(1-&gt;4)-[alpha-L-Fuc-(1-&gt;3)]-beta-D-GlcNAc derivative + GDP + H(+). The catalysed reaction is beta-D-Gal-(1-&gt;4)-beta-D-GlcNAc-(1-&gt;3)-beta-D-Gal-(1-&gt;4)-D-Glc + GDP-beta-L-fucose = beta-D-Gal-(1-&gt;4)-[alpha-L-Fuc-(1-&gt;3)]-beta-D-GlcNAc-(1-&gt;3)-beta-D-Gal-(1-&gt;4)-D-Glc + GDP + H(+). The enzyme catalyses an alpha-L-Fuc-(1-&gt;2)-beta-D-Gal-(1-&gt;4)-beta-D-GlcNAc derivative + GDP-beta-L-fucose = an alpha-L-Fuc-(1-&gt;2)-beta-D-Gal-(1-&gt;4)-[alpha-L-Fuc-(1-&gt;3)]-beta-D-GlcNAc derivative + GDP + H(+). It functions in the pathway protein modification; protein glycosylation. Its pathway is glycolipid biosynthesis. With respect to regulation, activated by Mn2+. Catalyzes alpha(1-&gt;3) linkage of fucosyl moiety transferred from GDP-beta-L-fucose to N-acetyl glucosamine (GlcNAc) within type 2 lactosamine (LacNAc, beta-D-Gal-(1-&gt;4)-beta-D-GlcNAc-) glycan attached to glycolipids and N- or O-linked glycoproteins. Fucosylates distal type 2 LacNAc and its fucosylated (H-type 2 LacNAc) and sialylated (sialyl-type 2 LacNAc) derivatives to form Lewis x (Lex) (CD15) and Lewis y (Ley) antigenic epitopes involved in cell adhesion and differentiation. Generates Lex epitopes in the brain, presumably playing a role in the maintenance of neuronal stemness and neurite outgrowth in progenitor neural cells. Fucosylates the internal type 2 LacNAc unit of the polylactosamine chain to form VIM-2 antigen that serves as recognition epitope for SELE. Can also modify milk oligosaccharides, in particular type 2 tetrasaccharide LNnT. The polypeptide is 4-galactosyl-N-acetylglucosaminide 3-alpha-L-fucosyltransferase 9 (Homo sapiens (Human)).